The chain runs to 431 residues: 3-isopropylmalate dehydratase large subunit (431 aa).

Residues cysteine 308, cysteine 368, and cysteine 371 each contribute to the [4Fe-4S] cluster site.

It belongs to the aconitase/IPM isomerase family. LeuC type 2 subfamily. Heterodimer of LeuC and LeuD. [4Fe-4S] cluster is required as a cofactor.

The enzyme catalyses (2R,3S)-3-isopropylmalate = (2S)-2-isopropylmalate. The protein operates within amino-acid biosynthesis; L-leucine biosynthesis; L-leucine from 3-methyl-2-oxobutanoate: step 2/4. Functionally, catalyzes the isomerization between 2-isopropylmalate and 3-isopropylmalate, via the formation of 2-isopropylmaleate. The protein is 3-isopropylmalate dehydratase large subunit of Desulfosudis oleivorans (strain DSM 6200 / JCM 39069 / Hxd3) (Desulfococcus oleovorans).